A 102-amino-acid chain; its full sequence is Small ribosomal subunit protein uS10 (102 aa).

Belongs to the universal ribosomal protein uS10 family. As to quaternary structure, part of the 30S ribosomal subunit.

Involved in the binding of tRNA to the ribosomes. The polypeptide is Small ribosomal subunit protein uS10 (Rhizobium etli (strain CIAT 652)).